The sequence spans 428 residues: 3-phosphoshikimate 1-carboxyvinyltransferase (428 aa).

Residues Lys22, Ser23, and Arg27 each contribute to the 3-phosphoshikimate site. Phosphoenolpyruvate is bound at residue Lys22. Positions 96 and 124 each coordinate phosphoenolpyruvate. Residues Ser170, Ser171, Gln172, Ser198, Asp314, Asn337, and Lys341 each contribute to the 3-phosphoshikimate site. Gln172 contributes to the phosphoenolpyruvate binding site. Asp314 functions as the Proton acceptor in the catalytic mechanism. Phosphoenolpyruvate is bound by residues Arg345, Arg387, and Lys412.

It belongs to the EPSP synthase family. As to quaternary structure, monomer.

The protein localises to the cytoplasm. The catalysed reaction is 3-phosphoshikimate + phosphoenolpyruvate = 5-O-(1-carboxyvinyl)-3-phosphoshikimate + phosphate. It functions in the pathway metabolic intermediate biosynthesis; chorismate biosynthesis; chorismate from D-erythrose 4-phosphate and phosphoenolpyruvate: step 6/7. Catalyzes the transfer of the enolpyruvyl moiety of phosphoenolpyruvate (PEP) to the 5-hydroxyl of shikimate-3-phosphate (S3P) to produce enolpyruvyl shikimate-3-phosphate and inorganic phosphate. The chain is 3-phosphoshikimate 1-carboxyvinyltransferase from Shewanella denitrificans (strain OS217 / ATCC BAA-1090 / DSM 15013).